Here is a 247-residue protein sequence, read N- to C-terminus: DNA polymerase sliding clamp (247 aa).

Belongs to the PCNA family. As to quaternary structure, homotrimer. The subunits circularize to form a toroid; DNA passes through its center. Replication factor C (RFC) is required to load the toroid on the DNA.

In terms of biological role, sliding clamp subunit that acts as a moving platform for DNA processing. Responsible for tethering the catalytic subunit of DNA polymerase and other proteins to DNA during high-speed replication. This chain is DNA polymerase sliding clamp, found in Halobacterium salinarum (strain ATCC 29341 / DSM 671 / R1).